The following is a 536-amino-acid chain: Zinc finger protein 623 (536 aa).

Residues 57–77 (GELLGNPEGQSLGSSPSQDRG) form a disordered region. The segment covering 64–74 (EGQSLGSSPSQ) has biased composition (polar residues). 13 C2H2-type zinc fingers span residues 123 to 145 (NPCDICGKTFTFNSDLVRHRISH), 151 to 173 (YTCDQCGKGFGQSSHLMEHQRIH), 179 to 201 (YVCNVCGKDFIHYSGLIEHQRVH), 207 to 229 (FKCAQCGKAFCHSSDLIRHQRVH), 235 to 257 (FECKECGKGFSQSSLLIRHQRIH), 263 to 285 (YECNECGKSFIRSSSLIRHYQIH), 291 to 313 (YECKECGKAFRHRSDLIEHQRIH), 319 to 341 (FECNECGKAFIRSSKLIQHQRIH), 347 to 369 (YVCNECGKRFSQTSNFTQHQRIH), 375 to 397 (YECNECGKAFFLSSYLIRHQKIH), 403 to 425 (YECKECGKAFLQKAHLTEHQKIH), 431 to 453 (FECKDCGKAFIQSSKLLLHQIIH), and 459 to 481 (YVCSYCGKGFIQRSNFLQHQKIH). Residue lysine 445 forms a Glycyl lysine isopeptide (Lys-Gly) (interchain with G-Cter in SUMO2) linkage. The disordered stretch occupies residues 513–536 (LSLSKAPIHLGERSVDKGEHTGNL). Over residues 522–536 (LGERSVDKGEHTGNL) the composition is skewed to basic and acidic residues.

The protein belongs to the krueppel C2H2-type zinc-finger protein family.

The protein localises to the nucleus. May be involved in transcriptional regulation. This Homo sapiens (Human) protein is Zinc finger protein 623 (ZNF623).